Consider the following 36-residue polypeptide: Zinc metalloproteinase-disintegrin-like VaH1 (36 aa).

Positions M1 to N36 constitute a Peptidase M12B domain.

This sequence belongs to the venom metalloproteinase (M12B) family. P-III subfamily. P-IIIa sub-subfamily. As to quaternary structure, monomer. It depends on Zn(2+) as a cofactor. The N-terminus is blocked. Post-translationally, glycosylated. In terms of tissue distribution, expressed by the venom gland.

It is found in the secreted. Inhibited by EDTA, but not inhibited by iodoacetamide, PMSF and pepstatin A. In terms of biological role, snake venom zinc metalloprotease that exhibits strong hemorrhagic activity. It also degrades alpha-chain of fibrinogen (FGA), but not the beta- and the gamma-chains. Possesses potent azocaseinolytic activity and cleaves insulin B-chain, hydrolyzing it at positions Ala(14)-Leu(15), followed by Tyr(16)-Leu(17) and His(10)-Leu(11). In vivo, subcutaneous injection into mice induces strong hemorrhage. The polypeptide is Zinc metalloproteinase-disintegrin-like VaH1 (Vipera ammodytes ammodytes (Western sand viper)).